A 46-amino-acid chain; its full sequence is Mu-segestritoxin-Sf1h (46 aa).

4 disulfides stabilise this stretch: Cys3/Cys19, Cys10/Cys22, Cys18/Cys42, and Cys24/Cys40. Positions 31–33 (RPW) are keys region for toxin activity.

Belongs to the neurotoxin 16 (SFI) family. Expressed by the venom gland.

It is found in the secreted. Its function is as follows. Insecticidal toxin. It inhibits insect voltage-gated sodium channels (Nav) by partially blocking the channel pore in DUM neurons from the American cockroach, not by acting as a gating modifier. The inhibition is only partially reversible after prolonged washout. In vivo, the toxin causes flaccid paralysis followed by death when injected into Heliothis virescens larvae. It also causes uncoordinated movements followed by full paralysis to sheep blowflies (Lucilia cuprina). When the toxin is fused to snowdrop lectin, it is orally active against larvae of the tomato moth (Laconobia oleracea), the rice brown planthopper (Nilaparvata lugens), and the peach-potato aphid (Myzus persicae). In Segestria florentina (Tube-web spider), this protein is Mu-segestritoxin-Sf1h.